A 588-amino-acid chain; its full sequence is Peptidoglycan D,D-transpeptidase FtsI (588 aa).

Residues 19-39 (FISWRFALLCGCILLALAFLL) traverse the membrane as a helical segment. The Acyl-ester intermediate role is filled by S307. Residues 578–588 (INQGEGTGGRS) constitute a propeptide that is removed on maturation.

The protein belongs to the transpeptidase family. FtsI subfamily.

The protein localises to the cell inner membrane. It carries out the reaction Preferential cleavage: (Ac)2-L-Lys-D-Ala-|-D-Ala. Also transpeptidation of peptidyl-alanyl moieties that are N-acyl substituents of D-alanine.. It participates in cell wall biogenesis; peptidoglycan biosynthesis. Functionally, catalyzes cross-linking of the peptidoglycan cell wall at the division septum. This chain is Peptidoglycan D,D-transpeptidase FtsI, found in Escherichia coli O157:H7.